A 549-amino-acid chain; its full sequence is Chaperonin GroEL (549 aa).

ATP-binding positions include 29 to 32 (TLGP), Lys50, 86 to 90 (DGTTT), Gly414, 477 to 479 (NAL), and Asp493.

It belongs to the chaperonin (HSP60) family. In terms of assembly, forms a cylinder of 14 subunits composed of two heptameric rings stacked back-to-back. Interacts with the co-chaperonin GroES.

It localises to the cytoplasm. The enzyme catalyses ATP + H2O + a folded polypeptide = ADP + phosphate + an unfolded polypeptide.. Functionally, together with its co-chaperonin GroES, plays an essential role in assisting protein folding. The GroEL-GroES system forms a nano-cage that allows encapsulation of the non-native substrate proteins and provides a physical environment optimized to promote and accelerate protein folding. The chain is Chaperonin GroEL from Leptospira biflexa serovar Patoc (strain Patoc 1 / Ames).